The sequence spans 528 residues: Homoserine O-acetyltransferase (528 aa).

One can recognise an AB hydrolase-1 domain in the interval 60-245; the sequence is LVICHALTGS…AALLTYRSRD (186 aa). Residue Ser-154 is the Nucleophile of the active site. Disordered regions lie at residues 250 to 335 and 388 to 413; these read RFGR…VKTQ and DLSA…DATE. Polar residues predominate over residues 273–282; the sequence is QETTDPSVPS. A compositionally biased stretch (basic and acidic residues) spans 295-304; the sequence is AWREHNDGHR. A compositionally biased stretch (low complexity) spans 389 to 409; it reads LSAPSRDTSLSSLSSGLPSSP. Residues Asp-438 and His-467 contribute to the active site.

This sequence belongs to the AB hydrolase superfamily. MetX family.

It localises to the cytoplasm. It carries out the reaction L-homoserine + acetyl-CoA = O-acetyl-L-homoserine + CoA. It participates in amino-acid biosynthesis; L-methionine biosynthesis via de novo pathway; O-acetyl-L-homoserine from L-homoserine: step 1/1. With respect to regulation, inhibited by 6-carbamoyl-3a,4,5,9b-tetrahydro-3H-cyclopenta[ c]quinoline-4-carboxylic acid (CTCQC). Functionally, commits homoserine to the methionine biosynthesis pathway by catalyzing its O-acetylation. The polypeptide is Homoserine O-acetyltransferase (Cryptococcus neoformans var. grubii serotype A (strain H99 / ATCC 208821 / CBS 10515 / FGSC 9487) (Filobasidiella neoformans var. grubii)).